A 92-amino-acid chain; its full sequence is MSELEKAMVALIDVFHQYSGREGDKHKLKKSELKELINNELSHFLEEIKEQEVVDKVMETLDNDGDGECDFQEFMAFVAMVTTACHEFFEHE.

A Blocked amino end (Ser); alternate modification is found at S2. Residue S2 is modified to N-acetylserine; alternate. EF-hand domains are found at residues 13–48 (DVFHQYSGREGDKHKLKKSELKELINNELSHFLEEI) and 49–84 (KEQEVVDKVMETLDNDGDGECDFQEFMAFVAMVTTA). H16 contributes to the Zn(2+) binding site. Ca(2+) is bound by residues S19, E22, and D24. H26 lines the Zn(2+) pocket. Ca(2+) is bound by residues K27, E32, D62, D64, D66, E68, and E73. Residues H86 and H91 each contribute to the Zn(2+) site.

It belongs to the S-100 family. As to quaternary structure, dimer of either two alpha chains, or two beta chains, or one alpha and one beta chain. The S100B dimer binds two molecules of STK38. Interacts with CACYBP in a calcium-dependent manner. Interacts with ATAD3A; this interaction probably occurs in the cytosol prior to ATAD3A mitochondrial targeting. Interacts with S100A6. The S100B dimer interacts with two molecules of CAPZA1. Interacts with AGER. Interacts with PPP5C (via TPR repeats); the interaction is calcium-dependent and modulates PPP5C activity. Interacts with TPPP; this interaction inhibits TPPP dimerization. Interacts with isoform CLSTN3beta of CLSTN3; interaction promotes secretion. As to expression, although predominant among the water-soluble brain proteins, S100 is also found in a variety of other tissues.

It localises to the cytoplasm. Its subcellular location is the nucleus. The protein localises to the secreted. Its function is as follows. Small zinc- and- and calcium-binding protein that is highly expressed in astrocytes and constitutes one of the most abundant soluble proteins in brain. Weakly binds calcium but binds zinc very tightly-distinct binding sites with different affinities exist for both ions on each monomer. Physiological concentrations of potassium ion antagonize the binding of both divalent cations, especially affecting high-affinity calcium-binding sites. Acts as a neurotrophic factor that promotes astrocytosis and axonal proliferation. Involved in innervation of thermogenic adipose tissue by acting as an adipocyte-derived neurotrophic factor that promotes sympathetic innervation of adipose tissue. Binds to and initiates the activation of STK38 by releasing autoinhibitory intramolecular interactions within the kinase. Interaction with AGER after myocardial infarction may play a role in myocyte apoptosis by activating ERK1/2 and p53/TP53 signaling. Could assist ATAD3A cytoplasmic processing, preventing aggregation and favoring mitochondrial localization. May mediate calcium-dependent regulation on many physiological processes by interacting with other proteins, such as TPR-containing proteins, and modulating their activity. This is Protein S100-B from Homo sapiens (Human).